Consider the following 257-residue polypeptide: uncharacterized protein (257 aa).

The helical transmembrane segment at 7 to 27 (LFLCVSFLLITIFIGGGGFMN) threads the bilayer.

Belongs to the staphylococcal tandem lipoprotein family.

The protein localises to the cell membrane. This is an uncharacterized protein from Staphylococcus epidermidis (strain ATCC 12228 / FDA PCI 1200).